A 405-amino-acid polypeptide reads, in one-letter code: Adenylosuccinate synthetase (405 aa).

GTP contacts are provided by residues 12–18 (GDEGKGK) and 40–42 (GHT). The active-site Proton acceptor is Asp13. Residues Asp13 and Gly40 each coordinate Mg(2+). Residues 13 to 16 (DEGK), 38 to 41 (NAGH), Thr121, Arg135, Gln213, Thr228, and Arg297 each bind IMP. The active-site Proton donor is His41. Residue 293 to 299 (TTTGRPR) participates in substrate binding. Residues Arg299, 325 to 327 (KMD), and 390 to 392 (SAG) contribute to the GTP site.

Belongs to the adenylosuccinate synthetase family. Homodimer. Mg(2+) is required as a cofactor.

It is found in the cytoplasm. The catalysed reaction is IMP + L-aspartate + GTP = N(6)-(1,2-dicarboxyethyl)-AMP + GDP + phosphate + 2 H(+). The protein operates within purine metabolism; AMP biosynthesis via de novo pathway; AMP from IMP: step 1/2. Functionally, plays an important role in the de novo pathway of purine nucleotide biosynthesis. Catalyzes the first committed step in the biosynthesis of AMP from IMP. In Deinococcus radiodurans (strain ATCC 13939 / DSM 20539 / JCM 16871 / CCUG 27074 / LMG 4051 / NBRC 15346 / NCIMB 9279 / VKM B-1422 / R1), this protein is Adenylosuccinate synthetase.